The primary structure comprises 411 residues: Serine hydroxymethyltransferase (411 aa).

(6S)-5,6,7,8-tetrahydrofolate contacts are provided by residues L117 and 121–123 (GHL). The residue at position 226 (K226) is an N6-(pyridoxal phosphate)lysine. (6S)-5,6,7,8-tetrahydrofolate is bound by residues E241 and 349–351 (SPF).

It belongs to the SHMT family. As to quaternary structure, homodimer. It depends on pyridoxal 5'-phosphate as a cofactor.

It localises to the cytoplasm. It catalyses the reaction (6R)-5,10-methylene-5,6,7,8-tetrahydrofolate + glycine + H2O = (6S)-5,6,7,8-tetrahydrofolate + L-serine. Its pathway is one-carbon metabolism; tetrahydrofolate interconversion. The protein operates within amino-acid biosynthesis; glycine biosynthesis; glycine from L-serine: step 1/1. Functionally, catalyzes the reversible interconversion of serine and glycine with tetrahydrofolate (THF) serving as the one-carbon carrier. This reaction serves as the major source of one-carbon groups required for the biosynthesis of purines, thymidylate, methionine, and other important biomolecules. Also exhibits THF-independent aldolase activity toward beta-hydroxyamino acids, producing glycine and aldehydes, via a retro-aldol mechanism. This is Serine hydroxymethyltransferase from Oceanobacillus iheyensis (strain DSM 14371 / CIP 107618 / JCM 11309 / KCTC 3954 / HTE831).